A 244-amino-acid chain; its full sequence is Protein DMP9 (244 aa).

Positions 1-56 (MEKTEESVGIRVYTATPPQKPSPSPPSRSPKPVLISSLPSLPSGAAAGGGRGRKRR) are disordered. Pro residues predominate over residues 18-29 (PQKPSPSPPSRS). The span at 30–45 (PKPVLISSLPSLPSGA) shows a compositional bias: low complexity. A run of 4 helical transmembrane segments spans residues 71–91 (MLVN…LPSI), 99–119 (GINT…CFFF), 173–193 (LTVN…AIAF), and 213–233 (VMES…LVFP).

It belongs to the plant DMP1 protein family. Restricted to flowers and pollen.

Its subcellular location is the endoplasmic reticulum membrane. The protein localises to the vacuole membrane. Functionally, involved in membrane remodeling. The sequence is that of Protein DMP9 from Arabidopsis thaliana (Mouse-ear cress).